The primary structure comprises 264 residues: 3-methyl-2-oxobutanoate hydroxymethyltransferase (264 aa).

Mg(2+)-binding residues include aspartate 44 and aspartate 83. 3-methyl-2-oxobutanoate is bound by residues 44-45 (DS), aspartate 83, and lysine 111. Glutamate 113 lines the Mg(2+) pocket. Glutamate 180 serves as the catalytic Proton acceptor.

It belongs to the PanB family. Homodecamer; pentamer of dimers. Mg(2+) is required as a cofactor.

The protein localises to the cytoplasm. The enzyme catalyses 3-methyl-2-oxobutanoate + (6R)-5,10-methylene-5,6,7,8-tetrahydrofolate + H2O = 2-dehydropantoate + (6S)-5,6,7,8-tetrahydrofolate. It participates in cofactor biosynthesis; (R)-pantothenate biosynthesis; (R)-pantoate from 3-methyl-2-oxobutanoate: step 1/2. Functionally, catalyzes the reversible reaction in which hydroxymethyl group from 5,10-methylenetetrahydrofolate is transferred onto alpha-ketoisovalerate to form ketopantoate. This Marinobacter nauticus (strain ATCC 700491 / DSM 11845 / VT8) (Marinobacter aquaeolei) protein is 3-methyl-2-oxobutanoate hydroxymethyltransferase.